Here is a 150-residue protein sequence, read N- to C-terminus: MTNSFQNSRRDLRERAFQALFNIEMGAELLAASQFAYGYDKVTGEDAQVLELPIFLLSLVTGVNNHKEELDNLISTHLKKGWSLERLTLTDKTLLRLGLFEIKYFDETPDRVALNEIIEVAKKYSDETSAKFINGLLSQYVSGAPSANKS.

The protein belongs to the NusB family.

Functionally, involved in transcription antitermination. Required for transcription of ribosomal RNA (rRNA) genes. Binds specifically to the boxA antiterminator sequence of the ribosomal RNA (rrn) operons. The chain is Transcription antitermination protein NusB from Streptococcus pyogenes serotype M1.